Here is a 500-residue protein sequence, read N- to C-terminus: Glycerol kinase (500 aa).

Residue threonine 16 coordinates ADP. ATP is bound by residues threonine 16 and threonine 17. Threonine 16 lines the sn-glycerol 3-phosphate pocket. Arginine 20 lines the ADP pocket. Sn-glycerol 3-phosphate-binding residues include arginine 86, glutamate 87, tyrosine 138, and aspartate 243. Glycerol-binding residues include arginine 86, glutamate 87, tyrosine 138, aspartate 243, and glutamine 244. The ADP site is built by threonine 265 and glycine 313. ATP is bound by residues threonine 265, glycine 313, glutamine 317, and glycine 414. ADP contacts are provided by glycine 414 and asparagine 418.

Belongs to the FGGY kinase family.

The enzyme catalyses glycerol + ATP = sn-glycerol 3-phosphate + ADP + H(+). It functions in the pathway polyol metabolism; glycerol degradation via glycerol kinase pathway; sn-glycerol 3-phosphate from glycerol: step 1/1. Its activity is regulated as follows. Inhibited by fructose 1,6-bisphosphate (FBP). Its function is as follows. Key enzyme in the regulation of glycerol uptake and metabolism. Catalyzes the phosphorylation of glycerol to yield sn-glycerol 3-phosphate. The polypeptide is Glycerol kinase (Trichormus variabilis (strain ATCC 29413 / PCC 7937) (Anabaena variabilis)).